The sequence spans 500 residues: Cysteine--tRNA ligase (500 aa).

Cys29 provides a ligand contact to Zn(2+). The short motif at 31-41 is the 'HIGH' region element; the sequence is VTVYDLCHLGH. The Zn(2+) site is built by Cys213, His238, and Glu242. The short motif at 270 to 274 is the 'KMSKS' region element; it reads KMSKS. Position 273 (Lys273) interacts with ATP.

Belongs to the class-I aminoacyl-tRNA synthetase family. As to quaternary structure, monomer. Zn(2+) is required as a cofactor.

The protein localises to the cytoplasm. The catalysed reaction is tRNA(Cys) + L-cysteine + ATP = L-cysteinyl-tRNA(Cys) + AMP + diphosphate. The sequence is that of Cysteine--tRNA ligase from Prochlorococcus marinus (strain NATL2A).